The chain runs to 217 residues: Probable ribonuclease P protein subunit 1 (217 aa).

It belongs to the eukaryotic/archaeal RNase P protein component 1 family.

It localises to the nucleus. Its subcellular location is the nucleolus. It carries out the reaction Endonucleolytic cleavage of RNA, removing 5'-extranucleotides from tRNA precursor.. Functionally, part of ribonuclease P, a protein complex that generates mature tRNA molecules by cleaving their 5'-ends. This chain is Probable ribonuclease P protein subunit 1, found in Schizosaccharomyces pombe (strain 972 / ATCC 24843) (Fission yeast).